We begin with the raw amino-acid sequence, 308 residues long: Protein translocase subunit SecF (308 aa).

6 helical membrane passes run 14–34, 134–154, 158–178, 185–205, 238–258, and 267–287; these read FFLL…LFGF, VYAV…RFEF, ISGI…FALL, TFVA…IVIF, SIRT…FGGI, and LIIG…PIWV.

It belongs to the SecD/SecF family. SecF subfamily. In terms of assembly, forms a complex with SecD. Part of the essential Sec protein translocation apparatus which comprises SecA, SecYEG and auxiliary proteins SecDF. Other proteins may also be involved.

It localises to the cell membrane. In terms of biological role, part of the Sec protein translocase complex. Interacts with the SecYEG preprotein conducting channel. SecDF uses the proton motive force (PMF) to complete protein translocation after the ATP-dependent function of SecA. The protein is Protein translocase subunit SecF of Alicyclobacillus acidocaldarius subsp. acidocaldarius (strain ATCC 27009 / DSM 446 / BCRC 14685 / JCM 5260 / KCTC 1825 / NBRC 15652 / NCIMB 11725 / NRRL B-14509 / 104-IA) (Bacillus acidocaldarius).